The chain runs to 316 residues: Serpentine receptor class delta-45 (316 aa).

Helical transmembrane passes span 8–28 (VFYP…IFII), 42–62 (ILLV…LIQI), 91–111 (YFLT…TIYL), 128–148 (VTFF…SLIL), 184–204 (IIIT…GLLL), 234–254 (LQVF…LVLA), and 266–286 (FFSV…LYSV).

Belongs to the nematode receptor-like protein srd family.

Its subcellular location is the membrane. This Caenorhabditis elegans protein is Serpentine receptor class delta-45 (srd-45).